Consider the following 154-residue polypeptide: Urease accessory protein UreE (154 aa).

This sequence belongs to the UreE family.

The protein localises to the cytoplasm. Involved in urease metallocenter assembly. Binds nickel. Probably functions as a nickel donor during metallocenter assembly. The polypeptide is Urease accessory protein UreE (Escherichia coli O157:H7).